Consider the following 91-residue polypeptide: Protein sigN139 (91 aa).

N-linked (GlcNAc...) asparagine glycans are attached at residues Asn23 and Asn34. Residues 46–68 (LLPVVAFISGTVTSITGLVAGAL) traverse the membrane as a helical segment.

It localises to the membrane. The polypeptide is Protein sigN139 (Dictyostelium discoideum (Social amoeba)).